We begin with the raw amino-acid sequence, 75 residues long: Small ribosomal subunit protein bS18 (75 aa).

The protein belongs to the bacterial ribosomal protein bS18 family. As to quaternary structure, part of the 30S ribosomal subunit. Forms a tight heterodimer with protein bS6.

Binds as a heterodimer with protein bS6 to the central domain of the 16S rRNA, where it helps stabilize the platform of the 30S subunit. The polypeptide is Small ribosomal subunit protein bS18 (Thermotoga sp. (strain RQ2)).